The primary structure comprises 690 residues: MSRQILVTSALPYANGSIHLGHLVEYIQTDIWVRFQKMRGTNCRYMCADDTHGTAIMLRAEKEAITPEALIQRVWAEHTRDFAGFHIGFDHYYSTHSDENREHASKIYLALKDAGLIEVKTIAQLYDPVKNLFLPDRFIKGECPKCGAADQYGDNCEVCGATYSPTELKNPVSAVSGATPVHKDSEHYFFKLGDCEAFLREWTTSGTLQAEAANKMQEWFAAGLNNWDISRDAPYFGFEIPDAPGKYFYVWLDAPVGYMASFARYAKDHGLDFDAWWGKDSKTELVHFIGKDILYFHALFWPAMLKFSGHRLPTAVYAHGFLTVNGQKMSKSRGTFITASSYLDQGLNPEWLRYYYAAKLNGTMEDIDLNLDDFVARVNSDLVGKFINIASRTAGFIHKKFDGKLADGVGNIELIGEFQAAADTIAAHYEARDYAKALREIMALADRANQYVADEKPWELAKDDAAVYRLHEVCTVALNLFRLLTLYLKPVLPKLAGEVERFLDIPALTWKDARSLFIRQAINAYSHLMTRIDPKSIEAMVDANKQNLEPTPAPAPARHAEAQAHAAQAVEAPKTETISIDDFAKVDLRIARIANAEHVEGADKLLRLTLDVGELGPRQVFAGIKSAYAPEALVGRLTVMVANLAPRKMKFGMSEGMVLAASNPDGHKDDVPGLFILSPDSGAEPGMKVK.

The short motif at 12 to 22 (PYANGSIHLGH) is the 'HIGH' region element. The Zn(2+) site is built by Cys143, Cys146, Cys156, and Cys159. Residues 328–332 (KMSKS) carry the 'KMSKS' region motif. Lys331 serves as a coordination point for ATP. Positions 582–690 (DFAKVDLRIA…SGAEPGMKVK (109 aa)) constitute a tRNA-binding domain.

The protein belongs to the class-I aminoacyl-tRNA synthetase family. MetG type 1 subfamily. Homodimer. Zn(2+) is required as a cofactor.

The protein resides in the cytoplasm. The catalysed reaction is tRNA(Met) + L-methionine + ATP = L-methionyl-tRNA(Met) + AMP + diphosphate. Functionally, is required not only for elongation of protein synthesis but also for the initiation of all mRNA translation through initiator tRNA(fMet) aminoacylation. This chain is Methionine--tRNA ligase, found in Thiobacillus denitrificans (strain ATCC 25259 / T1).